The primary structure comprises 250 residues: Histidine utilization repressor (250 aa).

The 69-residue stretch at 20 to 88 (APLYARVKQM…QGVGTFVAEP (69 aa)) folds into the HTH gntR-type domain. Positions 48 to 67 (ESELVSQLGFSRMTINRALR) form a DNA-binding region, H-T-H motif.

It participates in amino-acid degradation; L-histidine degradation into L-glutamate [regulation]. Repressor which binds to the hutP region in the histidine utilization (hut) operon. It blocks the expression of all the hut genes in the absence of inducer. The sequence is that of Histidine utilization repressor (hutC) from Pseudomonas aeruginosa (strain ATCC 15692 / DSM 22644 / CIP 104116 / JCM 14847 / LMG 12228 / 1C / PRS 101 / PAO1).